The primary structure comprises 955 residues: Beta-agarase B (955 aa).

It belongs to the glycosyl hydrolase 50 family.

The catalysed reaction is Hydrolysis of (1-&gt;4)-beta-D-galactosidic linkages in agarose, giving the tetramer as the predominant product.. Functionally, hydrolyzes agarose to yield predominantly neoagarotetraose and neoagarohexaose. The chain is Beta-agarase B (agaB) from Vibrio sp. (strain JT0107).